The primary structure comprises 474 residues: Hepatocyte nuclear factor 4-alpha (474 aa).

Positions 57–132 form a DNA-binding region, nuclear receptor; it reads SALCAICGDR…AGMKKEAVQN (76 aa). NR C4-type zinc fingers lie at residues 60–80 and 96–120; these read CAIC…CDGC and CRFS…LKKC. 2 positions are modified to phosphoserine: serine 142 and serine 143. Tyrosine 144 carries the post-translational modification Phosphotyrosine. The NR LBD domain maps to 147 to 377; the sequence is SSLPSINALL…NLLQEMLLGG (231 aa). The residue at position 166 (threonine 166) is a Phosphothreonine. Serine 167 is subject to Phosphoserine. Residues lysine 234 and lysine 307 each participate in a glycyl lysine isopeptide (Lys-Gly) (interchain with G-Cter in ubiquitin) cross-link. Serine 313 is modified (phosphoserine; by AMPK). The short motif at 368–376 is the 9aaTAD element; sequence NLLQEMLLG. Residues 413-450 are disordered; it reads SNGQMCEWPRPRGQAATPETPQPSPPSGSGSESYKLLP. A phosphothreonine mark is found at threonine 429 and threonine 432. Residue serine 436 is modified to Phosphoserine. At lysine 458 the chain carries N6-acetyllysine.

Belongs to the nuclear hormone receptor family. NR2 subfamily. As to quaternary structure, homodimerization is required for HNF4-alpha to bind to its recognition site. Interacts with CLOCK, BMAL1 and PER1. Interacts with PER2. Interacts with CRY1 and CRY2. Interacts with NR0B2/SHP; the resulting heterodimer is transcriptionally inactive. Interacts with DDX3X; this interaction disrupts the interaction between HNF4 and NR0B2 that forms inactive heterodimers and enhances the formation of active HNF4 homodimers. In terms of processing, phosphorylated on tyrosine residue(s); phosphorylation is important for its DNA-binding activity. Phosphorylation may directly or indirectly play a regulatory role in the subnuclear distribution. Phosphorylation at Ser-313 by AMPK reduces the ability to form homodimers and bind DNA. Acetylation at Lys-458 lowers transcriptional activation by about two-fold. As to expression, expressed in the liver, pancreas and colon in a circadian manner.

The protein resides in the nucleus. Transcriptional regulator which controls the expression of hepatic genes during the transition of endodermal cells to hepatic progenitor cells, facilitatating the recruitment of RNA pol II to the promoters of target genes. Activates the transcription of CYP2C38. Represses the CLOCK-BMAL1 transcriptional activity and is essential for circadian rhythm maintenance and period regulation in the liver and colon cells. In Mus musculus (Mouse), this protein is Hepatocyte nuclear factor 4-alpha (Hnf4a).